Here is a 172-residue protein sequence, read N- to C-terminus: Large ribosomal subunit protein uL10 (172 aa).

This sequence belongs to the universal ribosomal protein uL10 family. Part of the ribosomal stalk of the 50S ribosomal subunit. The N-terminus interacts with L11 and the large rRNA to form the base of the stalk. The C-terminus forms an elongated spine to which L12 dimers bind in a sequential fashion forming a multimeric L10(L12)X complex.

Its function is as follows. Forms part of the ribosomal stalk, playing a central role in the interaction of the ribosome with GTP-bound translation factors. The chain is Large ribosomal subunit protein uL10 from Parvibaculum lavamentivorans (strain DS-1 / DSM 13023 / NCIMB 13966).